A 302-amino-acid chain; its full sequence is Pyridoxal 5'-phosphate synthase subunit PdxS (302 aa).

Asp-32 lines the D-ribose 5-phosphate pocket. Lys-89 functions as the Schiff-base intermediate with D-ribose 5-phosphate in the catalytic mechanism. Gly-161 lines the D-ribose 5-phosphate pocket. Arg-173 serves as a coordination point for D-glyceraldehyde 3-phosphate. Residues Gly-222 and Gly-243–Ser-244 contribute to the D-ribose 5-phosphate site. The disordered stretch occupies residues Gly-278–Val-302.

Belongs to the PdxS/SNZ family. As to quaternary structure, in the presence of PdxT, forms a dodecamer of heterodimers.

It catalyses the reaction aldehydo-D-ribose 5-phosphate + D-glyceraldehyde 3-phosphate + L-glutamine = pyridoxal 5'-phosphate + L-glutamate + phosphate + 3 H2O + H(+). It participates in cofactor biosynthesis; pyridoxal 5'-phosphate biosynthesis. In terms of biological role, catalyzes the formation of pyridoxal 5'-phosphate from ribose 5-phosphate (RBP), glyceraldehyde 3-phosphate (G3P) and ammonia. The ammonia is provided by the PdxT subunit. Can also use ribulose 5-phosphate and dihydroxyacetone phosphate as substrates, resulting from enzyme-catalyzed isomerization of RBP and G3P, respectively. The protein is Pyridoxal 5'-phosphate synthase subunit PdxS of Halorubrum lacusprofundi (strain ATCC 49239 / DSM 5036 / JCM 8891 / ACAM 34).